Consider the following 96-residue polypeptide: Co-chaperonin GroES (96 aa).

The protein belongs to the GroES chaperonin family. In terms of assembly, heptamer of 7 subunits arranged in a ring. Interacts with the chaperonin GroEL.

The protein resides in the cytoplasm. In terms of biological role, together with the chaperonin GroEL, plays an essential role in assisting protein folding. The GroEL-GroES system forms a nano-cage that allows encapsulation of the non-native substrate proteins and provides a physical environment optimized to promote and accelerate protein folding. GroES binds to the apical surface of the GroEL ring, thereby capping the opening of the GroEL channel. The polypeptide is Co-chaperonin GroES (Hahella chejuensis (strain KCTC 2396)).